We begin with the raw amino-acid sequence, 553 residues long: Putative transport protein YidE (553 aa).

5 helical membrane passes run 4–24 (IALT…IGNV), 28–48 (GIGL…HFVS), 65–85 (FGLI…FFAS), 95–115 (LFAV…HKLF), and 158–178 (MSYA…MWML). RCK C-terminal domains follow at residues 191 to 276 (QQHE…VIGQ) and 279 to 361 (DTSL…VLGN). 5 consecutive transmembrane segments (helical) span residues 371 to 391 (MLPV…PVFV), 394 to 414 (FPAA…LILG), 439 to 459 (IVLF…NTLV), 464 to 484 (LSWI…VGIL), and 533 to 553 (LVMF…WSIG).

The protein belongs to the AAE transporter (TC 2.A.81) family. YidE subfamily.

It is found in the cell membrane. In Shigella dysenteriae serotype 1 (strain Sd197), this protein is Putative transport protein YidE.